The primary structure comprises 270 residues: Bis(5'-nucleosyl)-tetraphosphatase, symmetrical (270 aa).

It belongs to the Ap4A hydrolase family.

The catalysed reaction is P(1),P(4)-bis(5'-adenosyl) tetraphosphate + H2O = 2 ADP + 2 H(+). Functionally, hydrolyzes diadenosine 5',5'''-P1,P4-tetraphosphate to yield ADP. The chain is Bis(5'-nucleosyl)-tetraphosphatase, symmetrical from Cellvibrio japonicus (strain Ueda107) (Pseudomonas fluorescens subsp. cellulosa).